We begin with the raw amino-acid sequence, 353 residues long: MDFKIAVLAGDGIGPEISVQGVEVMSAVCEKFGHKVNYEYAICGADAIDKVGDPFPEETYRVCKNADAVLFSAVGDPKFDNDPTAKVRPEQGLLAMRKKLGLFANIRPVQTFKCLVHKSPLRAELVEGADFLCIRELTGGMYFGEKYQDNDKAYDTNMYTRPEIERILKVGFEYAMKRRKHLTVVDKANVLASSRLWRQIAQEMAPQYPEVTTDYMFVDNAAMKMIQEPKFFDVMVTENTFGDILTDEGSVISGSMGLLPSASTGESTPVFEPIHGSWPQAKGLNIANPLAQILSVAMLFEYFDCKAEGALIRKAVDASLDANVRTPEIQVEGGEKFGTKEVGAWIVDYIRKA.

The substrate site is built by Arg97, Arg107, Arg135, and Asp219. Mg(2+) is bound by residues Asp219, Asp243, and Asp247.

This sequence belongs to the isocitrate and isopropylmalate dehydrogenases family. LeuB type 1 subfamily. Homodimer. It depends on Mg(2+) as a cofactor. The cofactor is Mn(2+).

The protein localises to the cytoplasm. The catalysed reaction is (2R,3S)-3-isopropylmalate + NAD(+) = 4-methyl-2-oxopentanoate + CO2 + NADH. The protein operates within amino-acid biosynthesis; L-leucine biosynthesis; L-leucine from 3-methyl-2-oxobutanoate: step 3/4. Catalyzes the oxidation of 3-carboxy-2-hydroxy-4-methylpentanoate (3-isopropylmalate) to 3-carboxy-4-methyl-2-oxopentanoate. The product decarboxylates to 4-methyl-2 oxopentanoate. This Bacteroides fragilis (strain ATCC 25285 / DSM 2151 / CCUG 4856 / JCM 11019 / LMG 10263 / NCTC 9343 / Onslow / VPI 2553 / EN-2) protein is 3-isopropylmalate dehydrogenase.